The primary structure comprises 1057 residues: DNA-directed RNA polymerase subunit beta' (1057 aa).

Positions 60, 62, 75, and 78 each coordinate Zn(2+). Residues D449, D451, and D453 each contribute to the Mg(2+) site. 4 residues coordinate Zn(2+): C822, C896, C903, and C906.

Belongs to the RNA polymerase beta' chain family. In terms of assembly, the RNAP catalytic core consists of 2 alpha, 1 beta, 1 beta' and 1 omega subunit. When a sigma factor is associated with the core the holoenzyme is formed, which can initiate transcription. Mg(2+) serves as cofactor. Requires Zn(2+) as cofactor.

It catalyses the reaction RNA(n) + a ribonucleoside 5'-triphosphate = RNA(n+1) + diphosphate. Functionally, DNA-dependent RNA polymerase catalyzes the transcription of DNA into RNA using the four ribonucleoside triphosphates as substrates. In Staphylococcus aureus, this protein is DNA-directed RNA polymerase subunit beta'.